The sequence spans 62 residues: Small ribosomal subunit protein uS14 (62 aa).

Residues C25, C28, C41, and C44 each coordinate Zn(2+).

This sequence belongs to the universal ribosomal protein uS14 family. Zinc-binding uS14 subfamily. Part of the 30S ribosomal subunit. Contacts proteins S3 and S10. The cofactor is Zn(2+).

Functionally, binds 16S rRNA, required for the assembly of 30S particles and may also be responsible for determining the conformation of the 16S rRNA at the A site. This chain is Small ribosomal subunit protein uS14, found in Hydrogenobaculum sp. (strain Y04AAS1).